A 218-amino-acid polypeptide reads, in one-letter code: Large ribosomal subunit protein eL13 (218 aa).

Positions 196–218 (AKRAKEAAESEDAAKGDPKKAKK) are disordered. A compositionally biased stretch (basic and acidic residues) spans 199–218 (AKEAAESEDAAKGDPKKAKK).

This sequence belongs to the eukaryotic ribosomal protein eL13 family. In terms of assembly, component of the 60S large ribosomal subunit (LSU).

It is found in the cytoplasm. In terms of biological role, component of the ribosome, a large ribonucleoprotein complex responsible for the synthesis of proteins in the cell. The small ribosomal subunit (SSU) binds messenger RNAs (mRNAs) and translates the encoded message by selecting cognate aminoacyl-transfer RNA (tRNA) molecules. The large subunit (LSU) contains the ribosomal catalytic site termed the peptidyl transferase center (PTC), which catalyzes the formation of peptide bonds, thereby polymerizing the amino acids delivered by tRNAs into a polypeptide chain. The nascent polypeptides leave the ribosome through a tunnel in the LSU and interact with protein factors that function in enzymatic processing, targeting, and the membrane insertion of nascent chains at the exit of the ribosomal tunnel. As part of the LSU, it is probably required for its formation and the maturation of rRNAs. The protein is Large ribosomal subunit protein eL13 (RpL13) of Drosophila melanogaster (Fruit fly).